The sequence spans 76 residues: MSIEERVKKIIVEQLGVKEEDVKPEASFVEDLGADSLDTVELVMALEEEFDIEIPDEEAEKITTVQSAIDYVQNNQ.

Residues 1-76 form the Carrier domain; that stretch reads MSIEERVKKI…SAIDYVQNNQ (76 aa). The residue at position 36 (Ser-36) is an O-(pantetheine 4'-phosphoryl)serine.

This sequence belongs to the acyl carrier protein (ACP) family. 4'-phosphopantetheine is transferred from CoA to a specific serine of apo-ACP by AcpS. This modification is essential for activity because fatty acids are bound in thioester linkage to the sulfhydryl of the prosthetic group.

It is found in the cytoplasm. It participates in lipid metabolism; fatty acid biosynthesis. Carrier of the growing fatty acid chain in fatty acid biosynthesis. The protein is Acyl carrier protein of Haemophilus influenzae (strain 86-028NP).